The following is a 491-amino-acid chain: Protein DETOXIFICATION 56 (491 aa).

Helical transmembrane passes span 39–59 (LPLVVMNLLWFGKMTTTSVFL), 72–92 (LGFSFANVTGFSVLYGISAAM), 111–131 (TLFMAVLLLLLISVPISFLWL), 154–174 (LLYLLPELPILSFLCPLKAYL), 181–201 (LPIMFTTAAATSLHIPINIVL), 212–232 (MAVWITDFIVVILLTGYVIVV), 261–281 (GPCCLTVCLEWWCYEILVLLT), 291–311 (VSILIIVFNFDYLLYAVMLSL), 336–356 (YTTLIVGIISGCIGALVMIAF), 379–399 (MLIMAVIEVVNFPLMVCGEIV), 409–429 (MYANLSGFYLLALPLGATLAF), and 438–458 (FLIGLFVGISLCLSILLIFIA).

The protein belongs to the multi antimicrobial extrusion (MATE) (TC 2.A.66.1) family. As to quaternary structure, interacts with BCA4 and HT1. As to expression, preferentially expressed in guard cells.

Its subcellular location is the cell membrane. Functionally, could function as a HCO(3)(-) -sensing component in the CO(2) signaling pathway in guard cells. Acts as an upstream repressor of HT1. Plays a role in stomatal response to CO(2). The sequence is that of Protein DETOXIFICATION 56 from Arabidopsis thaliana (Mouse-ear cress).